The primary structure comprises 833 residues: Leucine--tRNA ligase (833 aa).

The short motif at 41 to 52 is the 'HIGH' region element; sequence PYPSGAGLHVGH. A 'KMSKS' region motif is present at residues 610-614; it reads KMSKS. An ATP-binding site is contributed by Lys613.

Belongs to the class-I aminoacyl-tRNA synthetase family.

It localises to the cytoplasm. The enzyme catalyses tRNA(Leu) + L-leucine + ATP = L-leucyl-tRNA(Leu) + AMP + diphosphate. The polypeptide is Leucine--tRNA ligase (Streptococcus pyogenes serotype M2 (strain MGAS10270)).